The chain runs to 396 residues: 1-deoxy-D-xylulose 5-phosphate reductoisomerase (396 aa).

6 residues coordinate NADPH: threonine 15, glycine 16, serine 17, isoleucine 18, glycine 41, and asparagine 129. A 1-deoxy-D-xylulose 5-phosphate-binding site is contributed by lysine 130. An NADPH-binding site is contributed by glutamate 131. Aspartate 155 is a binding site for Mn(2+). Residues serine 156, glutamate 157, serine 182, and histidine 205 each coordinate 1-deoxy-D-xylulose 5-phosphate. Glutamate 157 serves as a coordination point for Mn(2+). NADPH is bound at residue glycine 211. 1-deoxy-D-xylulose 5-phosphate contacts are provided by serine 218, asparagine 223, lysine 224, and glutamate 227. Glutamate 227 provides a ligand contact to Mn(2+).

Belongs to the DXR family. The cofactor is Mg(2+). Mn(2+) is required as a cofactor.

It carries out the reaction 2-C-methyl-D-erythritol 4-phosphate + NADP(+) = 1-deoxy-D-xylulose 5-phosphate + NADPH + H(+). The protein operates within isoprenoid biosynthesis; isopentenyl diphosphate biosynthesis via DXP pathway; isopentenyl diphosphate from 1-deoxy-D-xylulose 5-phosphate: step 1/6. Functionally, catalyzes the NADPH-dependent rearrangement and reduction of 1-deoxy-D-xylulose-5-phosphate (DXP) to 2-C-methyl-D-erythritol 4-phosphate (MEP). This chain is 1-deoxy-D-xylulose 5-phosphate reductoisomerase, found in Xanthomonas oryzae pv. oryzae (strain MAFF 311018).